A 219-amino-acid chain; its full sequence is 7-cyano-7-deazaguanine synthase (219 aa).

Position 10–20 (10–20 (FSGGQDSTTCL)) interacts with ATP. Zn(2+)-binding residues include Cys188, Cys197, Cys200, and Cys203.

It belongs to the QueC family. It depends on Zn(2+) as a cofactor.

It catalyses the reaction 7-carboxy-7-deazaguanine + NH4(+) + ATP = 7-cyano-7-deazaguanine + ADP + phosphate + H2O + H(+). It participates in purine metabolism; 7-cyano-7-deazaguanine biosynthesis. Its function is as follows. Catalyzes the ATP-dependent conversion of 7-carboxy-7-deazaguanine (CDG) to 7-cyano-7-deazaguanine (preQ(0)). This Bacteroides fragilis (strain ATCC 25285 / DSM 2151 / CCUG 4856 / JCM 11019 / LMG 10263 / NCTC 9343 / Onslow / VPI 2553 / EN-2) protein is 7-cyano-7-deazaguanine synthase.